A 288-amino-acid polypeptide reads, in one-letter code: MASLKEIDGRIKSTKKMKQITKAMNMVSSSKLRRAEKNTKQFEPYMEKMQDAITAIAGASKNSSHPMLRPRQVQRSGYLVITSDKGLAGAYSSNVLKRLINDIKEKHTSSDEYSIIVLGQSGVDFLKNRGYEIENSLVDVPDQPSFKSIQAIAKHAIDLFSEEHIDELKIYYSHYVSVLENKPTTKQVLPLSREDSSQGQGQMSSYEFEPDKESILSVILPQYVESLIYGTILDAKASEHAARMTAMKNASDNATELIDDLSLQYNRARQAEITQQITEIVGGSAALE.

The protein belongs to the ATPase gamma chain family. As to quaternary structure, F-type ATPases have 2 components, CF(1) - the catalytic core - and CF(0) - the membrane proton channel. CF(1) has five subunits: alpha(3), beta(3), gamma(1), delta(1), epsilon(1). CF(0) has three main subunits: a, b and c.

It is found in the cell membrane. In terms of biological role, produces ATP from ADP in the presence of a proton gradient across the membrane. The gamma chain is believed to be important in regulating ATPase activity and the flow of protons through the CF(0) complex. This Staphylococcus haemolyticus (strain JCSC1435) protein is ATP synthase gamma chain.